Here is a 33-residue protein sequence, read N- to C-terminus: Brevinin-2DYc (33 aa).

A disulfide bridge links C27 with C33.

As to expression, expressed by the skin glands.

The protein localises to the secreted. In terms of biological role, antimicrobial peptide. A mixture of Brevinin-2DYc/2DYd is active against the Gram-positive bacterium S.aureus (MIC=15 uM) and the Gram-negative bacterium E.coli (MIC=15 uM). The protein is Brevinin-2DYc of Rana dybowskii (Dybovsky's frog).